A 185-amino-acid chain; its full sequence is Elongation factor P (185 aa).

It belongs to the elongation factor P family.

The protein resides in the cytoplasm. It participates in protein biosynthesis; polypeptide chain elongation. Functionally, involved in peptide bond synthesis. Stimulates efficient translation and peptide-bond synthesis on native or reconstituted 70S ribosomes in vitro. Probably functions indirectly by altering the affinity of the ribosome for aminoacyl-tRNA, thus increasing their reactivity as acceptors for peptidyl transferase. This is Elongation factor P from Oleidesulfovibrio alaskensis (strain ATCC BAA-1058 / DSM 17464 / G20) (Desulfovibrio alaskensis).